Reading from the N-terminus, the 184-residue chain is Photosystem I assembly protein Ycf4 (184 aa).

The next 2 helical transmembrane spans lie at Leu22–Ser42 and Ile64–Ile84.

The protein belongs to the Ycf4 family.

It localises to the plastid. The protein resides in the chloroplast thylakoid membrane. In terms of biological role, seems to be required for the assembly of the photosystem I complex. This chain is Photosystem I assembly protein Ycf4, found in Angiopteris evecta (Mule's foot fern).